Consider the following 244-residue polypeptide: Cyclin-Q (244 aa).

It belongs to the cyclin family. Cyclin-like FAM58 subfamily.

May be an activating cyclin for the cyclin-associated kinase CDK10. In Xenopus laevis (African clawed frog), this protein is Cyclin-Q (ccnq).